Consider the following 118-residue polypeptide: Ribosome-binding factor A (118 aa).

It belongs to the RbfA family. As to quaternary structure, monomer. Binds 30S ribosomal subunits, but not 50S ribosomal subunits or 70S ribosomes.

It localises to the cytoplasm. Its function is as follows. One of several proteins that assist in the late maturation steps of the functional core of the 30S ribosomal subunit. Associates with free 30S ribosomal subunits (but not with 30S subunits that are part of 70S ribosomes or polysomes). Required for efficient processing of 16S rRNA. May interact with the 5'-terminal helix region of 16S rRNA. This is Ribosome-binding factor A from Dehalococcoides mccartyi (strain ATCC BAA-2266 / KCTC 15142 / 195) (Dehalococcoides ethenogenes (strain 195)).